Reading from the N-terminus, the 549-residue chain is Zinc finger protein 382 (549 aa).

The segment at 1–105 (MNCHSVPLQG…DKPPTSIVII (105 aa)) is mediates interaction with TRIM28. 2 represses transcription regions span residues 10–51 (GPVS…FISV) and 75–210 (MFPS…PEQR). The KRAB domain occupies 12 to 83 (VSFKDVTVDF…RMFPSQSYLE (72 aa)). 10 C2H2-type zinc fingers span residues 211–233 (FECD…DRAH), 295–317 (FQCP…QRIH), 323–345 (YICS…EKTH), 351–373 (YLCV…HKTH), 379–401 (YECT…QRTH), 407–429 (YQCA…QRTH), 435–457 (YMCS…QRIH), 463–485 (YVCS…YRIH), 491–513 (NGCP…QKTH), and 519–541 (YECH…QKTH). The segment at 295–549 (FQCPYCGNSF…THKAETVRFQ (255 aa)) is required for transcriptional repression activity; probably mediates sequence-specific DNA-binding.

Belongs to the krueppel C2H2-type zinc-finger protein family. In terms of assembly, interacts with TRIM28; enhances the transcriptional repressor activity. Ubiquitously expressed with higher expression in lung, kidney and testis.

It localises to the nucleus. In terms of biological role, functions as a sequence-specific transcriptional repressor. This is Zinc finger protein 382 (Znf382) from Rattus norvegicus (Rat).